Here is a 100-residue protein sequence, read N- to C-terminus: Acylphosphatase (100 aa).

Residues 3–92 enclose the Acylphosphatase-like domain; that stretch reads RRSYSVIGRV…PLPDTFDIRF (90 aa). Active-site residues include R18 and N36. A disordered region spans residues 76–100; sequence DDPAHEGPLPDTFDIRFRAPGSASE.

It belongs to the acylphosphatase family.

It carries out the reaction an acyl phosphate + H2O = a carboxylate + phosphate + H(+). The chain is Acylphosphatase (acyP) from Nitratidesulfovibrio vulgaris (strain ATCC 29579 / DSM 644 / CCUG 34227 / NCIMB 8303 / VKM B-1760 / Hildenborough) (Desulfovibrio vulgaris).